Consider the following 267-residue polypeptide: MSNETIKLVIAGPRGRMGQEAVKLAERTPHFDLVGAIDHTYDQQKLSDVMPVESDAFIYTDIHACFTETQPDVLIDLTTPEIGKVHTKIALEHGVRPVVGTTGFSEADLKELTSLTEEKGIGAIIAPNFALGAILMMKFSKMAANYFEDVEIIELHHDQKLDAPSGTALKTAEMISEVRKEKQQGHPDEKEILPGARGAEQNGIRLHSVRLPGLIAHQEVMFGMDGQTLQIRHDSYNRASFMSGVKLSVEQVMKIDQLVYGLENIID.

Residues 12–17, 100–102, and 126–129 contribute to the NAD(+) site; these read GPRGRM, GTT, and APNF. Catalysis depends on histidine 156, which acts as the Proton donor/acceptor. Histidine 157 provides a ligand contact to (S)-2,3,4,5-tetrahydrodipicolinate. The Proton donor role is filled by lysine 160. Residue 166-167 coordinates (S)-2,3,4,5-tetrahydrodipicolinate; that stretch reads GT.

This sequence belongs to the DapB family.

The protein resides in the cytoplasm. The catalysed reaction is (S)-2,3,4,5-tetrahydrodipicolinate + NAD(+) + H2O = (2S,4S)-4-hydroxy-2,3,4,5-tetrahydrodipicolinate + NADH + H(+). It catalyses the reaction (S)-2,3,4,5-tetrahydrodipicolinate + NADP(+) + H2O = (2S,4S)-4-hydroxy-2,3,4,5-tetrahydrodipicolinate + NADPH + H(+). It functions in the pathway amino-acid biosynthesis; L-lysine biosynthesis via DAP pathway; (S)-tetrahydrodipicolinate from L-aspartate: step 4/4. Functionally, catalyzes the conversion of 4-hydroxy-tetrahydrodipicolinate (HTPA) to tetrahydrodipicolinate. In Bacillus subtilis (strain 168), this protein is 4-hydroxy-tetrahydrodipicolinate reductase.